We begin with the raw amino-acid sequence, 2006 residues long: Supporter of activation of yellow protein (2006 aa).

8 disordered regions span residues 1-208 (MNDL…RRVE), 313-347 (MPAKNDAHLSSLSPASASSSSASSSSSSSSSSSLA), 458-564 (EEKP…AQSQ), 744-794 (DTQD…DPAR), 821-916 (DLEG…KSRR), 929-1029 (VSVG…NNNS), 1044-1082 (CSSSSSTSSGAAANQQVIGGSGSSSMLPPTTILSSSDPL), and 1099-1196 (QQLR…SAVA). A compositionally biased stretch (low complexity) spans 10–60 (VAATSSSGSESGTAVESAAATSTAGSAGAAGRPQSNCSANSNAKSVAASST). Polar residues predominate over residues 67 to 81 (VSSTSSPAQRDQQLN). Over residues 118–128 (SPPPTLPPPTT) the composition is skewed to pro residues. Residues 129 to 168 (PCDDAPSTTGASASASSASGEAPSAASAAGAAGGPMAATA) are compositionally biased toward low complexity. The segment covering 189–199 (ANPNSNANESQ) has biased composition (polar residues). Residues 321-347 (LSSLSPASASSSSASSSSSSSSSSSLA) are compositionally biased toward low complexity. Over residues 485 to 494 (GGESNSSSQE) the composition is skewed to polar residues. Residues 525–534 (SLSKEHDPKI) show a composition bias toward basic and acidic residues. Low complexity predominate over residues 543–563 (ASNGIASGGSKASKASKSAQS). Over residues 744 to 758 (DTQDNNNENHLKRTN) the composition is skewed to basic and acidic residues. Composition is skewed to polar residues over residues 759–769 (SEGNESPSSRL) and 828–844 (PPTQQQSISTPDQNGAL). Residues 861 to 870 (PATPQPPPVA) are compositionally biased toward pro residues. 2 stretches are compositionally biased toward basic and acidic residues: residues 936–945 (ADMKAKEKES) and 963–972 (ESPKTRDHRP). 2 stretches are compositionally biased toward low complexity: residues 978 to 990 (RTTTSTNTNLQPT) and 1018 to 1029 (SSESESNNNNNS). Residues 1053-1080 (GAAANQQVIGGSGSSSMLPPTTILSSSD) show a composition bias toward polar residues. The segment covering 1103–1112 (SSRPSSISCG) has biased composition (low complexity). Basic residues predominate over residues 1147–1158 (GRGRGRRSRGGR). Residues 1161–1173 (GSSSVDRAVSVGG) show a composition bias toward low complexity. The interval 1340-1573 (MIQEQVALYL…PPTDLMAQLL (234 aa)) is SAY. Positions 1579–1685 (AVGSDEIKTS…AGSEDEDGNE (107 aa)) are disordered. 2 stretches are compositionally biased toward low complexity: residues 1627-1652 (TASSSSTSSAQSVSSASSGNGSSSDT) and 1660-1677 (FSSTSSCSSSTGASSGAG). The PHD-type 1; degenerate zinc finger occupies 1694–1751 (TCGVCLRSQHRNARDMPEAFIRCYTCRKRVHPSCVDMPPRMVGRVRNYNWQCAGCKCC). The segment at 1753–1796 (KCRSSQRPGKMLYCEQCDRGYHIYCLGLRTVPDGRWSCERCCFC) adopts a PHD-type 2; degenerate zinc-finger fold. A disordered region spans residues 1887–1911 (TSAQTDDSPMPSPGLTTNGGRALSP).

The protein belongs to the SAYP family. In terms of tissue distribution, widely expressed. Highly expressed in ovary. Expressed in nursing cells and growing oocytes at all stages of development and accumulates in mature oocytes. Expressed in the nuclei of syncytium blastoderm of early embryos and in the nuclei of different tissues of late embryos, larvae, and adults.

The protein localises to the nucleus. It localises to the cytoplasm. Its subcellular location is the chromosome. In terms of biological role, essential transcription regulator during early development. Coactivates transcription of some euchromatin genes and repress transcription in of euchromatin genes translocated to heterochromatin. The polypeptide is Supporter of activation of yellow protein (e(y)3) (Drosophila melanogaster (Fruit fly)).